The chain runs to 458 residues: NADH-quinone oxidoreductase subunit N (458 aa).

Transmembrane regions (helical) follow at residues 4–24 (LLPE…AVII), 30–50 (IISN…FKYS), 62–82 (GINI…SMII), 94–114 (LKFE…VAIS), 118–138 (FLLL…LAGF), 153–173 (FILG…IYGF), 194–214 (LGLI…LSSV), 235–255 (FTAA…KLII), 261–281 (INYN…AFGA), 290–310 (LMAY…LLHN), 318–338 (LLYI…LIML), 361–381 (IAAI…LTGF), 397–417 (FILA…YLKV), and 438–458 (LLLI…IISF).

It belongs to the complex I subunit 2 family. NDH-1 is composed of 14 different subunits. Subunits NuoA, H, J, K, L, M, N constitute the membrane sector of the complex.

Its subcellular location is the cell inner membrane. The catalysed reaction is a quinone + NADH + 5 H(+)(in) = a quinol + NAD(+) + 4 H(+)(out). Its function is as follows. NDH-1 shuttles electrons from NADH, via FMN and iron-sulfur (Fe-S) centers, to quinones in the respiratory chain. The immediate electron acceptor for the enzyme in this species is believed to be ubiquinone. Couples the redox reaction to proton translocation (for every two electrons transferred, four hydrogen ions are translocated across the cytoplasmic membrane), and thus conserves the redox energy in a proton gradient. The protein is NADH-quinone oxidoreductase subunit N of Rickettsia felis (strain ATCC VR-1525 / URRWXCal2) (Rickettsia azadi).